Consider the following 189-residue polypeptide: Movement protein p22 (189 aa).

It belongs to the tombusvirus/aureusvirus movement protein p22 family. As to quaternary structure, interacts with host protein HFI22. Phosphorylated.

The protein localises to the host membrane. Its function is as follows. Cell-to-cell movement. Displays RNA-binding activity. The chain is Movement protein p22 from Capsicum annuum (Capsicum pepper).